A 243-amino-acid polypeptide reads, in one-letter code: ATP synthase subunit a (243 aa).

Helical transmembrane passes span 28–48 (SSLY…AGVF), 52–72 (VIPG…LGII), 83–103 (YFPL…VGML), 114–134 (HIVV…LIGL), 141–161 (FFAM…MIFL), 177–197 (LTAN…FVYP), 200–220 (LLIS…EVFI), and 221–241 (AMLQ…DSLF).

Belongs to the ATPase A chain family. In terms of assembly, F-type ATPases have 2 components, CF(1) - the catalytic core - and CF(0) - the membrane proton channel. CF(1) has five subunits: alpha(3), beta(3), gamma(1), delta(1), epsilon(1). CF(0) has three main subunits: a(1), b(2) and c(9-12). The alpha and beta chains form an alternating ring which encloses part of the gamma chain. CF(1) is attached to CF(0) by a central stalk formed by the gamma and epsilon chains, while a peripheral stalk is formed by the delta and b chains.

Its subcellular location is the cell inner membrane. In terms of biological role, key component of the proton channel; it plays a direct role in the translocation of protons across the membrane. In Neorickettsia sennetsu (strain ATCC VR-367 / Miyayama) (Ehrlichia sennetsu), this protein is ATP synthase subunit a.